Reading from the N-terminus, the 574-residue chain is uncharacterized protein (574 aa).

11 helical membrane-spanning segments follow: residues 14–34 (FFPT…LFFG), 54–74 (VVPL…LGIV), 124–144 (WLMA…SDTA), 205–225 (ICKC…TGTI), 253–273 (SWMA…WFIV), 323–343 (LVIF…VIPG), 350–370 (KGYV…FIWP), 403–423 (FPWS…AVRV), 441–461 (MPFF…TEFS), 485–505 (PLYF…LPMA), and 520–540 (MIDM…ITAI). Residues asparagine 565 and asparagine 569 are each glycosylated (N-linked (GlcNAc...) asparagine).

The protein belongs to the SLC13A/DASS transporter (TC 2.A.47) family. NADC subfamily.

The protein localises to the membrane. This is an uncharacterized protein from Caenorhabditis elegans.